Consider the following 188-residue polypeptide: Mitochondrial import inner membrane translocase subunit TIM23-2 (188 aa).

4 helical membrane passes run 64–84 (TGTA…ITGV), 112–131 (GNRI…GIVA), 138–154 (VWTS…VCRA), and 161–178 (AAVA…VVAG).

This sequence belongs to the Tim17/Tim22/Tim23 family. Homomultimer. Component of the TIM17:23 complex at least composed of TIM23, TIM17 and TIM50. The complex interacts with the TIM44 component of the PAM complex. Also part of the NADH-ubiquinone oxidoreductase complex I. Interacts with OEP163, TIM17-2, TIM21, TIM50 and MPPA2. Expressed in roots and young cotyledons. Detected in leaves and flowers.

It is found in the mitochondrion inner membrane. Essential component of the TIM17:23 complex, a complex that mediates the translocation of transit peptide-containing proteins across the mitochondrial inner membrane. Links the inner and outer membranes. In Arabidopsis thaliana (Mouse-ear cress), this protein is Mitochondrial import inner membrane translocase subunit TIM23-2 (TIM23-2).